The chain runs to 213 residues: Glycerol-3-phosphate acyltransferase (213 aa).

6 consecutive transmembrane segments (helical) span residues 3 to 23, 54 to 76, 83 to 100, 110 to 130, 142 to 162, and 163 to 183; these read ILLLILIAYLLGSIQTGLWIG, TITFLVDMLKGTLAVLLPIWLGI, IIGFFAIIGHVFPFFTGF, AGVLLGFVPLYFVFLLLVFAL, SITAAVVGLITLATFPAIHFL, and LDGYDPIFSAVLIIIVLVIIF.

Belongs to the PlsY family. As to quaternary structure, probably interacts with PlsX.

Its subcellular location is the cell membrane. It carries out the reaction an acyl phosphate + sn-glycerol 3-phosphate = a 1-acyl-sn-glycero-3-phosphate + phosphate. The protein operates within lipid metabolism; phospholipid metabolism. In terms of biological role, catalyzes the transfer of an acyl group from acyl-phosphate (acyl-PO(4)) to glycerol-3-phosphate (G3P) to form lysophosphatidic acid (LPA). This enzyme utilizes acyl-phosphate as fatty acyl donor, but not acyl-CoA or acyl-ACP. This chain is Glycerol-3-phosphate acyltransferase, found in Streptococcus thermophilus (strain ATCC BAA-491 / LMD-9).